Here is a 129-residue protein sequence, read N- to C-terminus: Profilin-4 (129 aa).

The protein belongs to the profilin family. As to expression, expressed in testis, in seminiferous tubules (at protein level). Expressed in spermatocytes and spermatids, but not in spermatogonium.

It localises to the cytoplasm. In terms of biological role, involved in male fertility. Required for manchette development and acrosome biogenesis during spermiogenesis. Binds in vitro to phospholipids, including phosphatidylinositol 3-phosphate (PtdIns(3)P), phosphatidylinositol 4,5-bisphosphate (PtdIns(4,5)P2), phosphatidylinositol 4-phosphate (PtdIns(4)P) and phosphatidic acid (PA). Contrary to other profilin family members, does not bind to actin in vitro. The polypeptide is Profilin-4 (Pfn4) (Rattus norvegicus (Rat)).